A 108-amino-acid polypeptide reads, in one-letter code: Glutaredoxin-1 (108 aa).

In terms of domain architecture, Glutaredoxin spans E3–R106. A disulfide bond links C23 and C26.

Belongs to the glutaredoxin family.

Its subcellular location is the virion. Functionally, has thioltransferase and dehydroascorbate reductase activities. This is Glutaredoxin-1 (OPG075) from Cowpox virus (strain GRI-90 / Grishak) (CPV).